Reading from the N-terminus, the 283-residue chain is Interferon alpha-inducible protein 27-like protein 2B (283 aa).

A mitochondrion-targeting transit peptide spans M1–A90. The interval A90–C120 is disordered. The next 3 helical transmembrane spans lie at F130–A150, G176–L196, and I202–C222. A disordered region spans residues P227–K283. Positions P242–K283 are enriched in low complexity.

This sequence belongs to the IFI6/IFI27 family. In terms of assembly, homooligomer. Interacts with BAK1. Interacts with BAX. Interacts with adenine nucleotide translocase.

The protein localises to the mitochondrion inner membrane. In terms of biological role, functions in the intrinsic apoptotic signaling pathway and may have an interferon-induced antiviral activity. This is Interferon alpha-inducible protein 27-like protein 2B from Mus musculus (Mouse).